A 116-amino-acid polypeptide reads, in one-letter code: Vitelline membrane protein Vm32E (116 aa).

A signal peptide spans 1 to 17 (MKIVAFTLVAFVALAGA). Residues 36–73 (GYPAPPCPTNYLFSCQPNLAPAPCAQEAPAYGSAGAYT) enclose the VM domain.

The protein belongs to the vitelline membrane family.

It localises to the secreted. Major early eggshell protein. This Drosophila santomea (Fruit fly) protein is Vitelline membrane protein Vm32E.